Consider the following 122-residue polypeptide: Ribosome-binding factor A (122 aa).

This sequence belongs to the RbfA family. Monomer. Binds 30S ribosomal subunits, but not 50S ribosomal subunits or 70S ribosomes.

Its subcellular location is the cytoplasm. One of several proteins that assist in the late maturation steps of the functional core of the 30S ribosomal subunit. Associates with free 30S ribosomal subunits (but not with 30S subunits that are part of 70S ribosomes or polysomes). Required for efficient processing of 16S rRNA. May interact with the 5'-terminal helix region of 16S rRNA. This is Ribosome-binding factor A from Polaromonas sp. (strain JS666 / ATCC BAA-500).